Reading from the N-terminus, the 669-residue chain is Protein real-time (669 aa).

Residues 3-175 (QKFQSPVRVY…FINQLEQEGV (173 aa)) enclose the PRELI/MSF1 domain. The CRAL-TRIO domain maps to 284–460 (EPAVVVEHFP…FLGGPCKTMI (177 aa)). The 120-residue stretch at 522–641 (HQNLYKSVDL…QLNLFYEVLS (120 aa)) folds into the GOLD domain.

Its subcellular location is the mitochondrion. This is Protein real-time from Drosophila pseudoobscura pseudoobscura (Fruit fly).